The chain runs to 1061 residues: Ceruloplasmin (1061 aa).

The signal sequence occupies residues 1 to 19 (MKFLLLSTFIFLYSSLALA). Plastocyanin-like domains are found at residues 20–199 (RDKH…LILC), 208–356 (KEKN…VRDC), 369–555 (HVRH…MKIC), 565–713 (RQKD…VNQC), 725–895 (GERT…LIVC), and 903–1057 (FSPK…VEQE). Tyr55, Gly64, and Tyr67 together coordinate Na(+). His120 and His122 together coordinate Cu(2+). O2 is bound at residue His120. A Ca(2+)-binding site is contributed by Lys128. An N-linked (GlcNAc...) asparagine glycan is attached at Asn138. The Ca(2+) site is built by Gln143, Asp146, and Asp147. A disulfide bond links Cys173 and Cys199. Residues His179 and His181 each contribute to the Cu(2+) site. Position 179 (His179) interacts with O2. Asn226 is a glycosylation site (N-linked (GlcNAc...) asparagine). Residue Ser255 coordinates Na(+). The cysteines at positions 275 and 356 are disulfide-linked. Residues His294, Cys337, and His342 each coordinate Cu(2+). N-linked (GlcNAc...) asparagine glycosylation is present at Asn396. The Na(+) site is built by Phe407, Gly416, and Tyr419. Cysteines 529 and 555 form a disulfide. The N-linked (GlcNAc...) asparagine glycan is linked to Asn583. Ser612 provides a ligand contact to Na(+). A disulfide bridge connects residues Cys632 and Cys713. The Cu(2+) site is built by His651, Cys694, His699, and Met704. Cys694 functions as the Nucleophile; for glutathione peroxidase activity in the catalytic mechanism. An N-linked (GlcNAc...) asparagine glycan is attached at Asn757. Na(+) contacts are provided by Phe762, Gly771, and Tyr774. Cys869 and Cys895 are oxidised to a cystine. Asn921 carries an N-linked (GlcNAc...) asparagine glycan. Na(+) is bound at residue Ser950. His989, His992, His994, His1034, Cys1035, His1036, His1040, and Met1045 together coordinate Cu(2+). O2 is bound by residues His992 and His994. His1036 lines the O2 pocket.

The protein belongs to the multicopper oxidase family. As to quaternary structure, found in a complex with MPO and LTF; interacts directly with MPO and LTF, which allows Fe(3+) incorporation into LTF, activation of CP ferroxidase activity and protection of CP antioxidant properties by MPO. Requires Cu(2+) as cofactor. Expressed in many tissues, including liver, eye and brain.

The protein resides in the secreted. It catalyses the reaction 4 Fe(2+) + O2 + 4 H(+) = 4 Fe(3+) + 2 H2O. It carries out the reaction 4 Cu(+) + O2 + 4 H(+) = 4 Cu(2+) + 2 H2O. The catalysed reaction is a hydroperoxide + 2 glutathione = an alcohol + glutathione disulfide + H2O. The enzyme catalyses 4 nitric oxide + O2 + 2 H2O = 4 nitrite + 4 H(+). It catalyses the reaction 2 glutathione + H2O2 = glutathione disulfide + 2 H2O. Multifunctional blue, copper-binding (6-7 atoms per molecule) glycoprotein. It has ferroxidase activity oxidizing Fe(2+) to Fe(3+) without releasing radical oxygen species. It is involved in iron transport across the cell membrane. Copper ions provide a large number of enzymatic activites. Oxidizes highly toxic ferrous ions to the ferric state for further incorporation onto apo-transferrins, catalyzes Cu(+) oxidation and promotes the oxidation of biogenic amines such as norepinephrin and serotonin. Provides Cu(2+) ions for the ascorbate-mediated deaminase degradation of the heparan sulfate chains of GPC1. Has glutathione peroxidase-like activity, can remove both hydrogen peroxide and lipid hydroperoxide in the presence of thiols. Also shows NO-oxidase and NO2 synthase activities that determine endocrine NO homeostasis. The polypeptide is Ceruloplasmin (Cp) (Mus musculus (Mouse)).